We begin with the raw amino-acid sequence, 155 residues long: Probable adenylyl-sulfate kinase (155 aa).

9–16 provides a ligand contact to ATP; sequence GPSGAGKT. S83 serves as the catalytic Phosphoserine intermediate. A disordered region spans residues 134 to 155; sequence LDGEYEEPENPEVVVDTDKNDR.

It belongs to the APS kinase family.

It carries out the reaction adenosine 5'-phosphosulfate + ATP = 3'-phosphoadenylyl sulfate + ADP + H(+). Its pathway is sulfur metabolism; hydrogen sulfide biosynthesis; sulfite from sulfate: step 2/3. In terms of biological role, catalyzes the synthesis of activated sulfate. In Archaeoglobus fulgidus (strain ATCC 49558 / DSM 4304 / JCM 9628 / NBRC 100126 / VC-16), this protein is Probable adenylyl-sulfate kinase (cysC).